Consider the following 292-residue polypeptide: ATP synthase subunit a (292 aa).

The next 6 membrane-spanning stretches (helical) occupy residues 37-57 (IDSV…FWLC), 96-116 (FIAP…AMDM), 144-164 (VVPT…LVLC), 192-212 (PVFA…EYVA), 230-250 (LVFM…SGVL), and 263-283 (AIFH…LALI).

The protein belongs to the ATPase A chain family. F-type ATPases have 2 components, CF(1) - the catalytic core - and CF(0) - the membrane proton channel. CF(1) has five subunits: alpha(3), beta(3), gamma(1), delta(1), epsilon(1). CF(0) has three main subunits: a(1), b(2) and c(9-12). The alpha and beta chains form an alternating ring which encloses part of the gamma chain. CF(1) is attached to CF(0) by a central stalk formed by the gamma and epsilon chains, while a peripheral stalk is formed by the delta and b chains.

The protein localises to the cell inner membrane. In terms of biological role, key component of the proton channel; it plays a direct role in the translocation of protons across the membrane. This Paracidovorax citrulli (strain AAC00-1) (Acidovorax citrulli) protein is ATP synthase subunit a.